Consider the following 422-residue polypeptide: Dihydroorotase (422 aa).

Residues His-57 and His-59 each contribute to the Zn(2+) site. Substrate-binding positions include His-59 to Arg-61 and Asn-91. Residues Asp-149, His-176, and His-229 each contribute to the Zn(2+) site. Asn-275 lines the substrate pocket. Position 302 (Asp-302) interacts with Zn(2+). The active site involves Asp-302. Substrate-binding positions include His-306 and Phe-320–Gly-321.

The protein belongs to the metallo-dependent hydrolases superfamily. DHOase family. Class I DHOase subfamily. Zn(2+) serves as cofactor.

It catalyses the reaction (S)-dihydroorotate + H2O = N-carbamoyl-L-aspartate + H(+). It participates in pyrimidine metabolism; UMP biosynthesis via de novo pathway; (S)-dihydroorotate from bicarbonate: step 3/3. Catalyzes the reversible cyclization of carbamoyl aspartate to dihydroorotate. The chain is Dihydroorotase from Endomicrobium trichonymphae.